The chain runs to 272 residues: U11/U12 small nuclear ribonucleoprotein 35 kDa protein (272 aa).

The 79-residue stretch at 51-129 folds into the RRM domain; the sequence is LTLFVSRLSP…REVFVDFELE (79 aa). Basic and acidic residues-rich tracts occupy residues 146–162 and 190–272; these read GKKE…DRPF and RDRS…EHNR. The interval 146–272 is disordered; sequence GKKESGQLRF…RKHRSDEHNR (127 aa). Positions 221 to 258 form a coiled coil; that stretch reads TKDDKEQNAEHTKRERSREQAKNDKDKEKKDSKRERSR.

It localises to the nucleus. The sequence is that of U11/U12 small nuclear ribonucleoprotein 35 kDa protein (snrnp35) from Xenopus laevis (African clawed frog).